The sequence spans 457 residues: Argininosuccinate lyase (457 aa).

This sequence belongs to the lyase 1 family. Argininosuccinate lyase subfamily.

It localises to the cytoplasm. The enzyme catalyses 2-(N(omega)-L-arginino)succinate = fumarate + L-arginine. Its pathway is amino-acid biosynthesis; L-arginine biosynthesis; L-arginine from L-ornithine and carbamoyl phosphate: step 3/3. The protein is Argininosuccinate lyase of Shigella dysenteriae serotype 1 (strain Sd197).